Reading from the N-terminus, the 370-residue chain is Glutamate 5-kinase (370 aa).

Lys17 lines the ATP pocket. Residues Ser57, Asp144, and Asn156 each coordinate substrate. Residues Ser176–Asp177 and Thr220–Lys226 each bind ATP. The PUA domain occupies Ala282–Pro360.

It belongs to the glutamate 5-kinase family.

It is found in the cytoplasm. It carries out the reaction L-glutamate + ATP = L-glutamyl 5-phosphate + ADP. It participates in amino-acid biosynthesis; L-proline biosynthesis; L-glutamate 5-semialdehyde from L-glutamate: step 1/2. Its function is as follows. Catalyzes the transfer of a phosphate group to glutamate to form L-glutamate 5-phosphate. The sequence is that of Glutamate 5-kinase from Mycolicibacterium smegmatis (strain ATCC 700084 / mc(2)155) (Mycobacterium smegmatis).